We begin with the raw amino-acid sequence, 125 residues long: Small ribosomal subunit protein uS12 (125 aa).

The tract at residues 1 to 26 is disordered; the sequence is MPTINQLVRKSRKTVKAQSDSPALKN. Aspartate 89 is subject to 3-methylthioaspartic acid.

It belongs to the universal ribosomal protein uS12 family. Part of the 30S ribosomal subunit. Contacts proteins S8 and S17. May interact with IF1 in the 30S initiation complex.

In terms of biological role, with S4 and S5 plays an important role in translational accuracy. Functionally, interacts with and stabilizes bases of the 16S rRNA that are involved in tRNA selection in the A site and with the mRNA backbone. Located at the interface of the 30S and 50S subunits, it traverses the body of the 30S subunit contacting proteins on the other side and probably holding the rRNA structure together. The combined cluster of proteins S8, S12 and S17 appears to hold together the shoulder and platform of the 30S subunit. In Clostridium tetani (strain Massachusetts / E88), this protein is Small ribosomal subunit protein uS12.